Consider the following 592-residue polypeptide: Aspartate--tRNA ligase (592 aa).

E173 serves as a coordination point for L-aspartate. The segment at 197 to 200 (QLFK) is aspartate. R219 contacts L-aspartate. Residues 219–221 (RDE) and Q228 each bind ATP. H448 serves as a coordination point for L-aspartate. E482 contributes to the ATP binding site. R489 provides a ligand contact to L-aspartate. 534 to 537 (GLDR) contributes to the ATP binding site.

It belongs to the class-II aminoacyl-tRNA synthetase family. Type 1 subfamily. In terms of assembly, homodimer.

It is found in the cytoplasm. It carries out the reaction tRNA(Asp) + L-aspartate + ATP = L-aspartyl-tRNA(Asp) + AMP + diphosphate. Catalyzes the attachment of L-aspartate to tRNA(Asp) in a two-step reaction: L-aspartate is first activated by ATP to form Asp-AMP and then transferred to the acceptor end of tRNA(Asp). The protein is Aspartate--tRNA ligase of Shewanella baltica (strain OS155 / ATCC BAA-1091).